The following is a 686-amino-acid chain: Soluble guanylate cyclase gcy-34 (686 aa).

Position 105 (histidine 105) interacts with heme. 2 coiled-coil regions span residues 306–335 (KKHM…ELTQ) and 398–432 (VEVN…LKDM). A Guanylate cyclase domain is found at 455–583 (TVMFCDLPAF…ETVTLASQME (129 aa)). 2 residues coordinate Mg(2+): aspartate 460 and aspartate 504.

Belongs to the adenylyl cyclase class-4/guanylyl cyclase family. As to quaternary structure, heterodimer; with other soluble guanylate cyclases. Heme serves as cofactor. In terms of tissue distribution, expressed in a small number of neurons, corresponding to URX, AQR and PQR neurons.

The protein localises to the cytoplasm. It carries out the reaction GTP = 3',5'-cyclic GMP + diphosphate. Its activity is regulated as follows. May be regulated by molecular oxygen. Probably not activated by nitric oxide (NO). In terms of biological role, synthesizes cyclic GMP (cGMP) from GTP. May be involved in sensitivity to quinine by regulating egl-4 activity through the production of cGMP. This is Soluble guanylate cyclase gcy-34 (gcy-34) from Caenorhabditis elegans.